The chain runs to 165 residues: Cytochrome c-type biogenesis protein CcmE (165 aa).

The Cytoplasmic portion of the chain corresponds to 1–29; sequence MSATAEQNARNPKGKGGFARTVSQRKRKR. The helical; Signal-anchor for type II membrane protein transmembrane segment at 30-50 threads the bilayer; sequence LFLIGGALAVLAVAVGLMLTA. Over 51-165 the chain is Periplasmic; the sequence is FNQDIRFFRT…LKKKGVWEGK (115 aa). 2 residues coordinate heme: His143 and Tyr147.

The protein belongs to the CcmE/CycJ family.

It is found in the cell inner membrane. Its function is as follows. Heme chaperone required for the biogenesis of c-type cytochromes. Transiently binds heme delivered by CcmC and transfers the heme to apo-cytochromes in a process facilitated by CcmF and CcmH. This Brucella canis (strain ATCC 23365 / NCTC 10854 / RM-666) protein is Cytochrome c-type biogenesis protein CcmE.